A 198-amino-acid chain; its full sequence is Recombination protein RecR (198 aa).

A C4-type zinc finger spans residues 57–72 (CSVCGNITDEDPCEIC). The region spanning 80–175 (EMILVVEQPK…KVTRLAHGLA (96 aa)) is the Toprim domain.

This sequence belongs to the RecR family.

Functionally, may play a role in DNA repair. It seems to be involved in an RecBC-independent recombinational process of DNA repair. It may act with RecF and RecO. This Latilactobacillus sakei subsp. sakei (strain 23K) (Lactobacillus sakei subsp. sakei) protein is Recombination protein RecR.